Consider the following 114-residue polypeptide: Iron-sulfur cluster insertion protein ErpA (114 aa).

The iron-sulfur cluster site is built by Cys42, Cys106, and Cys108.

Belongs to the HesB/IscA family. In terms of assembly, homodimer. The cofactor is iron-sulfur cluster.

Its function is as follows. Required for insertion of 4Fe-4S clusters for at least IspG. This Pasteurella multocida (strain Pm70) protein is Iron-sulfur cluster insertion protein ErpA.